Here is a 103-residue protein sequence, read N- to C-terminus: c-Myc-binding protein (103 aa).

Belongs to the AMY1 family. As to quaternary structure, binds via its C-terminal region to the N-terminal region of MYC. Associates with AKAP1/S-AKAP84. Interacts with MYCBPAP. Interacts with CFAP91.

It is found in the cytoplasm. Its subcellular location is the nucleus. Its function is as follows. May control the transcriptional activity of MYC. Stimulates the activation of E box-dependent transcription by MYC. This Bos taurus (Bovine) protein is c-Myc-binding protein (MYCBP).